The sequence spans 527 residues: MPLLSRSLRIIQNSPIRKVWNQVDTSPKHGICVPLFSIHTQNSCGIGEFLDLIPMIDWCTLCGFQILQILPINDTGSCSSPYNSISSISLNPLHLSISALPYKEEVSSSRKLIQEMQRLSQLSQVNYEKVIPMKRAFFKEYFRVCKSKNLTNHPDFCDFCEREKYWLHPYALFCSIREHLNYLPINHWSTTYTDLSYISQHEHTFAKDIEFYSYLQYLCFEQMKQVRKHADHKGCLIKGDIPILISKDSCDVWFYRKYFSSSESVGSPPDFYNAEGQNWNLPIYNMKTLRQDAYHWWKERLRYAENFYSLYRLDHVVGLFRFWVWDELGRGRFEPQDPKDYLDQGTDILSHLLKASSMLPIGEDLGTIPVDVKQALESLAVCGTRIPRWERDWEGTGAYIPFDQYNPLSVTSLSTHDSSTLALWWQEAPQEARLFAQFLGMPYTPSLSFHNHKEILKLSHKTSSIFHINLINDYLALCPDLISTNPLQERINLPGTISKNNWVYRVKPSIEQLSAHSKLNSLLASLF.

The protein belongs to the disproportionating enzyme family.

It localises to the cytoplasm. It catalyses the reaction Transfers a segment of a (1-&gt;4)-alpha-D-glucan to a new position in an acceptor, which may be glucose or a (1-&gt;4)-alpha-D-glucan.. In Chlamydia muridarum (strain MoPn / Nigg), this protein is 4-alpha-glucanotransferase (malQ).